Reading from the N-terminus, the 244-residue chain is Cell division protein ZapD (244 aa).

It belongs to the ZapD family. Interacts with FtsZ.

It localises to the cytoplasm. Cell division factor that enhances FtsZ-ring assembly. Directly interacts with FtsZ and promotes bundling of FtsZ protofilaments, with a reduction in FtsZ GTPase activity. The sequence is that of Cell division protein ZapD from Shewanella oneidensis (strain ATCC 700550 / JCM 31522 / CIP 106686 / LMG 19005 / NCIMB 14063 / MR-1).